The following is a 244-amino-acid chain: INO80 complex subunit E (244 aa).

A coiled-coil region spans residues 10–54; the sequence is DYKKKYRNLKRKLKFLIYEHECFQEELRKAQRKLLKVSRDKSFLL. Residues 63-236 form a disordered region; it reads VDEDSSDSDA…SGDDALDGDD (174 aa). The segment covering 99-115 has biased composition (low complexity); it reads PPLGGAPSPSSLSLPPS. Over residues 157-171 the composition is skewed to basic residues; it reads RPKREKRPRLPRKLK. Residues Lys-159 and Lys-171 each participate in a glycyl lysine isopeptide (Lys-Gly) (interchain with G-Cter in SUMO2) cross-link. Positions 202 to 212 are enriched in pro residues; the sequence is PLPPPKMPPPT.

As to quaternary structure, component of the chromatin remodeling INO80 complex; specifically part of a complex module associated with the N-terminus of INO80.

Its subcellular location is the nucleus. Functionally, putative regulatory component of the chromatin remodeling INO80 complex which is involved in transcriptional regulation, DNA replication and probably DNA repair. The chain is INO80 complex subunit E (INO80E) from Homo sapiens (Human).